The chain runs to 250 residues: Triosephosphate isomerase (250 aa).

9-11 is a substrate binding site; it reads NWK. Histidine 94 (electrophile) is an active-site residue. Residue glutamate 166 is the Proton acceptor of the active site. Substrate is bound by residues glycine 172, serine 212, and 233–234; that span reads GG.

This sequence belongs to the triosephosphate isomerase family. In terms of assembly, homodimer.

Its subcellular location is the cytoplasm. It carries out the reaction D-glyceraldehyde 3-phosphate = dihydroxyacetone phosphate. Its pathway is carbohydrate biosynthesis; gluconeogenesis. It participates in carbohydrate degradation; glycolysis; D-glyceraldehyde 3-phosphate from glycerone phosphate: step 1/1. Functionally, involved in the gluconeogenesis. Catalyzes stereospecifically the conversion of dihydroxyacetone phosphate (DHAP) to D-glyceraldehyde-3-phosphate (G3P). The sequence is that of Triosephosphate isomerase from Treponema denticola (strain ATCC 35405 / DSM 14222 / CIP 103919 / JCM 8153 / KCTC 15104).